A 654-amino-acid polypeptide reads, in one-letter code: Endoplasmic reticulum chaperone BiP (654 aa).

An N-terminal signal peptide occupies residues 1–18; sequence MKLSLVAAMLLLLSAARA. The tract at residues 1-80 is required for interaction with ELAPOR1; that stretch reads MKLSLVAAML…EGERLIGDAA (80 aa). An ATP-binding site is contributed by 36-39; sequence GTTY. Serine 86 carries the post-translational modification Phosphoserine. Residue lysine 96 coordinates ATP. N6-acetyllysine is present on lysine 125. A nucleotide-binding (NBD) region spans residues 125–280; the sequence is KPYIQVDIGG…KKKTGKDVRK (156 aa). Tyrosine 160 carries the 3'-nitrotyrosine modification. Lysine 213 bears the N6-acetyllysine mark. Position 227 to 229 (227 to 229) interacts with ATP; sequence GGT. The residue at position 271 (lysine 271) is an N6-acetyllysine. 293–300 serves as a coordination point for ATP; it reads EKAKRALS. Lysine 326 carries the N6-acetyllysine modification. Residue lysine 352 forms a Glycyl lysine isopeptide (Lys-Gly) (interchain with G-Cter in SUMO2) linkage. Lysine 353 carries the post-translational modification N6-acetyllysine; alternate. A Glycyl lysine isopeptide (Lys-Gly) (interchain with G-Cter in SUMO1); alternate cross-link involves residue lysine 353. 364 to 367 contacts ATP; the sequence is GSTR. The interdomain linker stretch occupies residues 409–419; it reads QDTGDLALLDV. Positions 420–500 are substrate-binding (SBD); sequence CPLTLGIETV…PRGVPQIEVT (81 aa). Lysine 447 is modified (N6-succinyllysine). Arginine 492 is modified (omega-N-methylarginine). Threonine 518 carries the post-translational modification O-AMP-threonine; alternate. Threonine 518 carries the post-translational modification Phosphothreonine; alternate. At lysine 585 the chain carries N6,N6,N6-trimethyllysine; by METTL21A; in vitro. At lysine 585 the chain carries N6,N6-dimethyllysine; alternate. Lysine 585 is subject to N6-methyllysine; alternate. Position 591 is an N6-methyllysine (lysine 591). Residues 633–654 form a disordered region; the sequence is KLYGSAGPPPTGEEDTAEKDEL. Phosphothreonine is present on residues threonine 643 and threonine 648. Residues 644-654 are compositionally biased toward acidic residues; sequence GEEDTAEKDEL. Positions 651 to 654 match the Prevents secretion from ER motif; that stretch reads KDEL.

Belongs to the heat shock protein 70 family. Monomer and homooligomer; homooligomerization via the interdomain linker inactivates the chaperone activity and acts as a storage of HSPA5/BiP molecules. Interacts with DNAJC1 (via J domain). Component of an EIF2 complex at least composed of CELF1/CUGBP1, CALR, CALR3, EIF2S1, EIF2S2, HSP90B1 and HSPA5. Part of a large chaperone multiprotein complex comprising DNAJB11, HSP90B1, HSPA5, HYOU, PDIA2, PDIA4, PDIA6, PPIB, SDF2L1, UGGT1 and very small amounts of ERP29, but not, or at very low levels, CALR nor CANX. Interacts with TMEM132A and TRIM21. May form a complex with ERLEC1, OS9, SEL1L and SYVN1. Interacts with DNAJC10. Interacts with DNAJB9/ERdj4; leading to recruit HSPA5/BiP to ERN1/IRE1. Interacts with ERN1/IRE1 (via luminal domain); the interaction takes place following interaction with DNAJB9/ERdj4 and leads to inactivate ERN1/IRE1, the interaction also competitively inhibits ERN1 interaction with MANF. Interacts directly with MANF (via SAP domain); the interaction inhibits ATP binding to HSPA5/BiP and subsequent nucleotide exchange. Interacts with EIF2AK3/PERK (via luminal domain); interaction leads to inactivate EIF2AK3/PERK. Interacts with MX1. Interacts with METTL23. Interacts with CEMIP; the interaction induces calcium leakage from the endoplasmic reticulum and cell migration. Interacts with PCSK4 form; the interaction takes place in the endoplasmic reticulum. Interacts with CIPC. Interacts with CCDC88B (via C-terminus); the interaction opposes ERN1-mediated JNK activation, protecting against apoptosis. Interacts with INPP5K; necessary for INPP5K localization at the endoplasmic reticulum. Interacts with MANF; the interaction is direct. Interacts with LOXL2; leading to activate the ERN1/IRE1-XBP1 pathway of the unfolded protein response. Interacts with CLU under stressed condition; interaction increases CLU protein stability; facilitates its retrotranslocation and redistribution to the mitochondria; cooperatively suppress stress-induced apoptosis by stabilizing mitochondrial membrane integrity. Interacts with CCDC47. Interacts with CLN3. Interacts with ELAPOR1; may regulate the function of HSPA5 in apoptosis and cell proliferation. Interacts with CASP7. Interacts with ILDR2; the interaction stabilizes ILDR2 expression. Interacts with ADAM7. In terms of processing, in unstressed cells, AMPylation at Thr-518 by FICD inactivates the chaperome activity: AMPylated form is locked in a relatively inert state and only weakly stimulated by J domain-containing proteins. In response to endoplasmic reticulum stress, de-AMPylation by the same protein, FICD, restores the chaperone activity.

Its subcellular location is the endoplasmic reticulum lumen. It is found in the melanosome. The protein resides in the cytoplasm. The protein localises to the cell surface. The catalysed reaction is ATP + H2O = ADP + phosphate + H(+). The chaperone activity is regulated by ATP-induced allosteric coupling of the nucleotide-binding (NBD) and substrate-binding (SBD) domains. In the ADP-bound and nucleotide-free (apo) states, the two domains have little interaction. In contrast, in the ATP-bound state the two domains are tightly coupled, which results in drastically accelerated kinetics in both binding and release of polypeptide substrates. J domain-containing co-chaperones (DNAJB9/ERdj4 or DNAJC10/ERdj5) stimulate the ATPase activity and are required for efficient substrate recognition by HSPA5/BiP. Homooligomerization inactivates participating HSPA5/BiP protomers and probably act as reservoirs to store HSPA5/BiP molecules when they are not needed by the cell. Its function is as follows. Endoplasmic reticulum chaperone that plays a key role in protein folding and quality control in the endoplasmic reticulum lumen. Involved in the correct folding of proteins and degradation of misfolded proteins via its interaction with DNAJC10/ERdj5, probably to facilitate the release of DNAJC10/ERdj5 from its substrate. Acts as a key repressor of the EIF2AK3/PERK and ERN1/IRE1-mediated unfolded protein response (UPR). In the unstressed endoplasmic reticulum, recruited by DNAJB9/ERdj4 to the luminal region of ERN1/IRE1, leading to disrupt the dimerization of ERN1/IRE1, thereby inactivating ERN1/IRE1. Also binds and inactivates EIF2AK3/PERK in unstressed cells. Accumulation of misfolded protein in the endoplasmic reticulum causes release of HSPA5/BiP from ERN1/IRE1 and EIF2AK3/PERK, allowing their homodimerization and subsequent activation. Plays an auxiliary role in post-translational transport of small presecretory proteins across endoplasmic reticulum (ER). May function as an allosteric modulator for SEC61 channel-forming translocon complex, likely cooperating with SEC62 to enable the productive insertion of these precursors into SEC61 channel. Appears to specifically regulate translocation of precursors having inhibitory residues in their mature region that weaken channel gating. May also play a role in apoptosis and cell proliferation. The protein is Endoplasmic reticulum chaperone BiP of Pongo abelii (Sumatran orangutan).